Consider the following 221-residue polypeptide: U1 small nuclear ribonucleoprotein C (221 aa).

A Matrin-type zinc finger spans residues 4–36 (HYCDYCDVFLTHDSVSVRKAHNSGRNHLQNVRE). Residues 80 to 221 (GAGPLSGSSD…PHSRTGYGPR (142 aa)) are disordered. The span at 142–158 (YSRPPPQGGPYSRPPPD) shows a compositional bias: pro residues. Over residues 178 to 190 (PLGYGAPLPGAYP) the composition is skewed to low complexity. Residues 191–204 (SGPPPNMRGPPPPL) are compositionally biased toward pro residues.

Belongs to the U1 small nuclear ribonucleoprotein C family. U1 snRNP is composed of the 7 core Sm proteins B/B', D1, D2, D3, E, F and G that assemble in a heptameric protein ring on the Sm site of the small nuclear RNA to form the core snRNP, and at least 3 U1 snRNP-specific proteins U1-70K, U1-A and U1-C. U1-C interacts with U1 snRNA and the 5' splice-site region of the pre-mRNA.

It localises to the nucleus. Functionally, component of the spliceosomal U1 snRNP, which is essential for recognition of the pre-mRNA 5' splice-site and the subsequent assembly of the spliceosome. U1-C is directly involved in initial 5' splice-site recognition for both constitutive and regulated alternative splicing. The interaction with the 5' splice-site seems to precede base-pairing between the pre-mRNA and the U1 snRNA. Stimulates commitment or early (E) complex formation by stabilizing the base pairing of the 5' end of the U1 snRNA and the 5' splice-site region. In Mycosarcoma maydis (Corn smut fungus), this protein is U1 small nuclear ribonucleoprotein C.